The following is a 323-amino-acid chain: Methionyl-tRNA formyltransferase (323 aa).

115–118 is a (6S)-5,6,7,8-tetrahydrofolate binding site; the sequence is SLLP.

The protein belongs to the Fmt family.

The enzyme catalyses L-methionyl-tRNA(fMet) + (6R)-10-formyltetrahydrofolate = N-formyl-L-methionyl-tRNA(fMet) + (6S)-5,6,7,8-tetrahydrofolate + H(+). Functionally, attaches a formyl group to the free amino group of methionyl-tRNA(fMet). The formyl group appears to play a dual role in the initiator identity of N-formylmethionyl-tRNA by promoting its recognition by IF2 and preventing the misappropriation of this tRNA by the elongation apparatus. This chain is Methionyl-tRNA formyltransferase, found in Lactococcus lactis subsp. cremoris (strain MG1363).